We begin with the raw amino-acid sequence, 334 residues long: Cysteine and histidine-rich domain-containing protein 1 (334 aa).

Zn(2+)-binding residues include Cys5, Cys10, Cys24, His27, Cys42, Cys43, Cys59, His64, Cys156, Cys161, Cys175, His178, Cys193, Cys194, Cys210, and His215. 2 CHORD domains span residues 5-64 (CYNR…KGQH) and 156-215 (CKNG…KGTH). The CS domain occupies 226-315 (VVPCRHDWHQ…AEFMTWARLE (90 aa)).

Regulates centrosome duplication. The polypeptide is Cysteine and histidine-rich domain-containing protein 1 (chordc1) (Xenopus laevis (African clawed frog)).